We begin with the raw amino-acid sequence, 137 residues long: Probable glycine cleavage system H protein 1 (137 aa).

Residues 31 to 113 enclose the Lipoyl-binding domain; the sequence is VAVIGITDYA…YGEGWIFKLK (83 aa). Lys-72 carries the post-translational modification N6-lipoyllysine.

Belongs to the GcvH family. As to quaternary structure, the glycine cleavage system is composed of four proteins: P, T, L and H. (R)-lipoate serves as cofactor.

The glycine cleavage system catalyzes the degradation of glycine. The H protein shuttles the methylamine group of glycine from the P protein to the T protein. The sequence is that of Probable glycine cleavage system H protein 1 from Saccharolobus solfataricus (strain ATCC 35092 / DSM 1617 / JCM 11322 / P2) (Sulfolobus solfataricus).